Reading from the N-terminus, the 428-residue chain is Histidinol dehydrogenase (428 aa).

NAD(+)-binding residues include Tyr125, Gln187, and Asn210. Substrate is bound by residues Ser234, Gln256, and His259. Positions 256 and 259 each coordinate Zn(2+). Residues Glu323 and His324 each act as proton acceptor in the active site. The substrate site is built by His324, Asp357, Glu411, and His416. Asp357 provides a ligand contact to Zn(2+). His416 provides a ligand contact to Zn(2+).

The protein belongs to the histidinol dehydrogenase family. Zn(2+) is required as a cofactor.

The catalysed reaction is L-histidinol + 2 NAD(+) + H2O = L-histidine + 2 NADH + 3 H(+). It functions in the pathway amino-acid biosynthesis; L-histidine biosynthesis; L-histidine from 5-phospho-alpha-D-ribose 1-diphosphate: step 9/9. In terms of biological role, catalyzes the sequential NAD-dependent oxidations of L-histidinol to L-histidinaldehyde and then to L-histidine. The chain is Histidinol dehydrogenase from Bacteroides thetaiotaomicron (strain ATCC 29148 / DSM 2079 / JCM 5827 / CCUG 10774 / NCTC 10582 / VPI-5482 / E50).